We begin with the raw amino-acid sequence, 352 residues long: MITYGSGDLLRADTEALVNTVNCVGVMGKGIALQFKRRYPEMFTAYEKACKRGEVTIGKMFVVDTGQLDGPKHIINFPTKKHWRAPSKLAYIDAGLIDLIRVIRELNIASVAVPPLGVGNGGLDWEDVEQRLVSAFQQLPDVDAVIYPPSGGSRAIEGVEGLRMTWGRAVILEAMRRYLQQRRAMEPWEDPAGISHLEIQKLMYFANEADPDLALDFTPGRYGPYSERVRHLLQGMEGAFTVGLGDGTARVLANQPISLTTKGTDAITDYLATDAAADRVSAAVDTVLRVIEGFEGPYGVELLASTHWVATREGAKEPATAAAAVRKWTKRKGRIYSDDRIGVALDRILMTA.

The Macro domain maps to 1-155 (MITYGSGDLL…IYPPSGGSRA (155 aa)). ADP-D-ribose is bound by residues 8-9 (DL), 20-22 (TVN), 31-34 (IALQ), and Thr79. The Nucleophile role is filled by Lys80. An ADP-D-ribose-binding site is contributed by 117–121 (GVGNG). Positions 164-352 (MTWGRAVILE…VALDRILMTA (189 aa)) are interaction with DarT.

Belongs to the DarG ADP-ribosyl glycohydrolase family. Interacts (via C-terminus) with cognate toxin DarT; this heterodimeric complex neutralizes the toxic effect of DarT by preventing ssDNA binding to DarT and consequently inactivating the toxin by direct protein-protein interactions.

The enzyme catalyses an N-(ADP-alpha-D-ribosyl)-thymidine in DNA + H2O = a thymidine in DNA + ADP-D-ribose. In terms of biological role, antitoxin component of the hybrid type II/IV toxin-antitoxin (TA) system DarTG, which plays a crucial role in controlling bacterial growth and bacteriophage infection. De-ADP-ribosylates DNA (probably) modified on thymidine by its cognate toxin DarT, which neutralizes the activity of cognate toxin DarT. The polypeptide is DNA ADP-ribosyl glycohydrolase (Mycobacterium bovis (strain BCG / Pasteur 1173P2)).